A 282-amino-acid chain; its full sequence is 4-diphosphocytidyl-2-C-methyl-D-erythritol kinase (282 aa).

Residue Lys13 is part of the active site. 96 to 106 (PMGGGIGGGSS) contributes to the ATP binding site. Asp138 is an active-site residue.

It belongs to the GHMP kinase family. IspE subfamily.

It catalyses the reaction 4-CDP-2-C-methyl-D-erythritol + ATP = 4-CDP-2-C-methyl-D-erythritol 2-phosphate + ADP + H(+). Its pathway is isoprenoid biosynthesis; isopentenyl diphosphate biosynthesis via DXP pathway; isopentenyl diphosphate from 1-deoxy-D-xylulose 5-phosphate: step 3/6. Its function is as follows. Catalyzes the phosphorylation of the position 2 hydroxy group of 4-diphosphocytidyl-2C-methyl-D-erythritol. This is 4-diphosphocytidyl-2-C-methyl-D-erythritol kinase from Pseudomonas syringae pv. syringae (strain B728a).